The following is a 313-amino-acid chain: MEEENATLLTEFVLTGFLYQPQWKIPLFLAFLVIYLITIMGNLGLIAVIWKDPHLHIPMYLLLGNLAFVDAWISSTVTPKMLNNFLAKSKMISLSECKIQFFSIAIGVTTECFLLATMAYDRYVAICKPLLYPAIMTNGLCIRLLILSYIAGILHALIHEGFLFRLTFCNSNIVHHIYCDTIPLSKISCTDSSINFLMVFIFSGSIQVFSIVTILISYTFVLFTVLEKKSDKGVRKAFSTCGAHLFSVCLYYGPLLLMYVGPASPQADGQNMVEPLFYTVIIPLLNPIIYSLRNKQVIVSFIKMLKRNVKVSY.

Residues 1–28 are Extracellular-facing; it reads MEEENATLLTEFVLTGFLYQPQWKIPLF. The N-linked (GlcNAc...) asparagine glycan is linked to N5. A helical transmembrane segment spans residues 29–49; the sequence is LAFLVIYLITIMGNLGLIAVI. Topologically, residues 50 to 56 are cytoplasmic; the sequence is WKDPHLH. Residues 57 to 77 form a helical membrane-spanning segment; sequence IPMYLLLGNLAFVDAWISSTV. The Extracellular segment spans residues 78–98; that stretch reads TPKMLNNFLAKSKMISLSECK. C97 and C179 are joined by a disulfide. The chain crosses the membrane as a helical span at residues 99–119; that stretch reads IQFFSIAIGVTTECFLLATMA. The Cytoplasmic segment spans residues 120-143; it reads YDRYVAICKPLLYPAIMTNGLCIR. The helical transmembrane segment at 144–164 threads the bilayer; that stretch reads LLILSYIAGILHALIHEGFLF. Residues 165-195 lie on the Extracellular side of the membrane; it reads RLTFCNSNIVHHIYCDTIPLSKISCTDSSIN. The helical transmembrane segment at 196–216 threads the bilayer; sequence FLMVFIFSGSIQVFSIVTILI. At 217-240 the chain is on the cytoplasmic side; sequence SYTFVLFTVLEKKSDKGVRKAFST. The helical transmembrane segment at 241 to 261 threads the bilayer; sequence CGAHLFSVCLYYGPLLLMYVG. The Extracellular segment spans residues 262–271; that stretch reads PASPQADGQN. A helical transmembrane segment spans residues 272 to 292; that stretch reads MVEPLFYTVIIPLLNPIIYSL. At 293 to 313 the chain is on the cytoplasmic side; the sequence is RNKQVIVSFIKMLKRNVKVSY.

It belongs to the G-protein coupled receptor 1 family.

The protein resides in the cell membrane. Odorant receptor. This chain is Olfactory receptor 5H15 (OR5H15), found in Homo sapiens (Human).